We begin with the raw amino-acid sequence, 62 residues long: Beta-defensin 133 (62 aa).

An N-terminal signal peptide occupies residues 1-21; that stretch reads MKIHIFLFVLFFFLVPIATRG. Cystine bridges form between C32–C60 and C39–C53.

Belongs to the beta-defensin family.

The protein localises to the secreted. In terms of biological role, has antibacterial activity. The polypeptide is Beta-defensin 133 (DEFB133) (Pan troglodytes (Chimpanzee)).